The sequence spans 110 residues: MALWMRFLPLLALLFLWESHPTQAFVKQHLCGSHLVEALYLVCGERGFFYTPMSRREVEDPQVAQLELGGGPGAGDLQTLALEVAQQKRGIVDQCCTSICSLYQLENYCN.

The N-terminal stretch at 1–24 (MALWMRFLPLLALLFLWESHPTQA) is a signal peptide. Cystine bridges form between Cys31/Cys96, Cys43/Cys109, and Cys95/Cys100. A propeptide spans 57–87 (EVEDPQVAQLELGGGPGAGDLQTLALEVAQQ) (c peptide).

This sequence belongs to the insulin family. Heterodimer of a B chain and an A chain linked by two disulfide bonds.

The protein localises to the secreted. Insulin decreases blood glucose concentration. It increases cell permeability to monosaccharides, amino acids and fatty acids. It accelerates glycolysis, the pentose phosphate cycle, and glycogen synthesis in liver. The protein is Insulin-2 (Ins2) of Mus musculus (Mouse).